The chain runs to 503 residues: Nuclear respiratory factor 1 (503 aa).

The interval 1-78 (MEEHGVTQTE…AHLAAAGPVG (78 aa)) is dimerization. The segment at 36 to 57 (SMLSADEDSPSSPEDTSYDDSD) is disordered. Phosphoserine; by CK2 occurs at positions 39, 44, 46, 47, and 52. The Nuclear localization signal motif lies at 88 to 116 (GKKRKRPHVFESNPSIRKRQQTRLLRKLR). A DNA-binding region spans residues 109 to 305 (TRLLRKLRAT…SIAHLVPSQT (197 aa)). Lys139 participates in a covalent cross-link: Glycyl lysine isopeptide (Lys-Gly) (interchain with G-Cter in SUMO2). The segment at 301 to 476 (VPSQTVVQTF…AQGNGPVQVA (176 aa)) is required for transcriptional activation.

The protein belongs to the NRF1/Ewg family. As to quaternary structure, homodimer. Binds DNA as a dimer. Interacts with PPRC1. Phosphorylation enhances DNA binding. In terms of tissue distribution, ubiquitously expressed with strongest expression in skeletal muscle.

The protein resides in the nucleus. Functionally, transcription factor that activates the expression of the EIF2S1 (EIF2-alpha) gene. Links the transcriptional modulation of key metabolic genes to cellular growth and development. Implicated in the control of nuclear genes required for respiration, heme biosynthesis, and mitochondrial DNA transcription and replication. The protein is Nuclear respiratory factor 1 (NRF1) of Homo sapiens (Human).